The primary structure comprises 534 residues: MQISQFNRLKRSALLFASVLLLSACQIESEPKSEFEQIQERGVLRVGTLNNQLSYYIGPDGPAGLDYELARKFAEQLGVKLEIRPAFRQAELFPALKKGDIDIIATGLNQTSQAVQRFRPGPAYYYVSQQVVYKKGQLRPRDVDQLIKYQESKDEKAGNEDSNAGAETLQIVEQSQFVPTLTALQKEHPELQFEIIGDADTRDLLKHVSTGELRFTVTDSVELSLAQRLYPDLALAFELTEDQPVSWFTRRSEDESLYAMLIEFFGNIKQSGELATLEEKYIGHIEAFDYVDTRAFIRALDNTLPKWSPLFQKYSEEFDWRLIAALAYQESHWKPKAKSPTGVRGMMMLTLPTAKSVGVTDRLDPEQSVRGGVEYLRRIVARVPDSINEHEKIWFALASYNVGYGHMMDARRLTKAQGGDPNAWADVKERLPLLRQKRYYSQTRYGYARGDEARNYVENIRRYYQSIIGHVSQKPAIDEDTEDLQVIPPLDPNLLVSGAVETLAEQVSGAVEVTPPPEENAPQEAEQTPVPKAE.

The signal sequence occupies residues 1–24 (MQISQFNRLKRSALLFASVLLLSA). A non-LT domain region spans residues 25-285 (CQIESEPKSE…TLEEKYIGHI (261 aa)). Residues 287 to 534 (AFDYVDTRAF…AEQTPVPKAE (248 aa)) form an LT domain region. Glu330 is an active-site residue. The interval 507–534 (VSGAVEVTPPPEENAPQEAEQTPVPKAE) is disordered. Low complexity predominate over residues 520–534 (NAPQEAEQTPVPKAE).

This sequence in the N-terminal section; belongs to the bacterial solute-binding protein 3 family. In the C-terminal section; belongs to the transglycosylase Slt family.

The protein localises to the cell outer membrane. The enzyme catalyses Exolytic cleavage of the (1-&gt;4)-beta-glycosidic linkage between N-acetylmuramic acid (MurNAc) and N-acetylglucosamine (GlcNAc) residues in peptidoglycan, from either the reducing or the non-reducing ends of the peptidoglycan chains, with concomitant formation of a 1,6-anhydrobond in the MurNAc residue.. Murein-degrading enzyme that degrades murein glycan strands and insoluble, high-molecular weight murein sacculi, with the concomitant formation of a 1,6-anhydromuramoyl product. Lytic transglycosylases (LTs) play an integral role in the metabolism of the peptidoglycan (PG) sacculus. Their lytic action creates space within the PG sacculus to allow for its expansion as well as for the insertion of various structures such as secretion systems and flagella. This Vibrio campbellii (strain ATCC BAA-1116) protein is Membrane-bound lytic murein transglycosylase F.